The sequence spans 134 residues: Histone H2B (134 aa).

Residues 1-10 (MSDKASTPKK) show a composition bias toward polar residues. 2 disordered regions span residues 1-29 (MSDK…EAKK) and 113-134 (VSEG…SKSR). A compositionally biased stretch (basic and acidic residues) spans 12–29 (ATKDATKPKKVGDEEAKK). Residues 125-134 (GQPTSGSKSR) show a composition bias toward polar residues.

This sequence belongs to the histone H2B family. The nucleosome is a histone octamer containing two molecules each of H2A, H2B, H3 and H4 assembled in one H3-H4 heterotetramer and two H2A-H2B heterodimers. The octamer wraps approximately 147 bp of DNA.

It is found in the nucleus. The protein localises to the chromosome. Core component of nucleosome. Nucleosomes wrap and compact DNA into chromatin, limiting DNA accessibility to the cellular machineries which require DNA as a template. Histones thereby play a central role in transcription regulation, DNA repair, DNA replication and chromosomal stability. DNA accessibility is regulated via a complex set of post-translational modifications of histones, also called histone code, and nucleosome remodeling. The polypeptide is Histone H2B (Entamoeba invadens).